Reading from the N-terminus, the 305-residue chain is UDP-3-O-acyl-N-acetylglucosamine deacetylase (305 aa).

Zn(2+) contacts are provided by His79, His238, and Asp242. The active-site Proton donor is His265.

This sequence belongs to the LpxC family. Zn(2+) serves as cofactor.

The enzyme catalyses a UDP-3-O-[(3R)-3-hydroxyacyl]-N-acetyl-alpha-D-glucosamine + H2O = a UDP-3-O-[(3R)-3-hydroxyacyl]-alpha-D-glucosamine + acetate. The protein operates within glycolipid biosynthesis; lipid IV(A) biosynthesis; lipid IV(A) from (3R)-3-hydroxytetradecanoyl-[acyl-carrier-protein] and UDP-N-acetyl-alpha-D-glucosamine: step 2/6. In terms of biological role, catalyzes the hydrolysis of UDP-3-O-myristoyl-N-acetylglucosamine to form UDP-3-O-myristoylglucosamine and acetate, the committed step in lipid A biosynthesis. The chain is UDP-3-O-acyl-N-acetylglucosamine deacetylase from Salmonella paratyphi A (strain ATCC 9150 / SARB42).